Consider the following 276-residue polypeptide: Bis(5'-nucleosyl)-tetraphosphatase, symmetrical (276 aa).

The protein belongs to the Ap4A hydrolase family.

It carries out the reaction P(1),P(4)-bis(5'-adenosyl) tetraphosphate + H2O = 2 ADP + 2 H(+). Its function is as follows. Hydrolyzes diadenosine 5',5'''-P1,P4-tetraphosphate to yield ADP. The chain is Bis(5'-nucleosyl)-tetraphosphatase, symmetrical from Legionella pneumophila (strain Lens).